Consider the following 935-residue polypeptide: Formin-I (935 aa).

Positions 35–76 (QQQQQQQQQQINNENENSINNQENKENNNKDNNNNNNKEIKQ) form a coiled coil. Disordered regions lie at residues 52-78 (SINN…KQSS), 380-511 (LSSA…QLTP), and 561-590 (KEKM…QSLS). The span at 384–407 (KKQPQQQPQKDVTSSSSSSSNSSS) shows a compositional bias: low complexity. The span at 418–428 (ITTNDSSSSNP) shows a compositional bias: polar residues. Basic and acidic residues predominate over residues 431–443 (DFDKLSLSSDDKV). A compositionally biased stretch (polar residues) spans 444-454 (NNNNVQIENTT). The region spanning 444–505 (NNNNVQIENT…KPNNSGGGGG (62 aa)) is the FH1 domain. Over residues 456-482 (SVPPPPPVGAPPPPPPPPPPPPPPPPS) the composition is skewed to pro residues. Residues 484–499 (LKLNRNRISTPKKPNN) show a composition bias toward polar residues. Positions 506-935 (GGQLTPLQKK…SLNLSTLNSK (430 aa)) constitute an FH2 domain. Residues 568–583 (NLNNSNNNNNNNSNNN) show a composition bias toward low complexity. Coiled coils occupy residues 702–730 (SLLD…FIKV) and 803–834 (QSSL…QQLL).

Belongs to the formin homology family. Diaphanous subfamily.

Formins play an important role in the nucleation of actin and the formation of linear actin filaments. The sequence is that of Formin-I (forI) from Dictyostelium discoideum (Social amoeba).